Consider the following 239-residue polypeptide: Purine nucleoside phosphorylase DeoD-type (239 aa).

His-5 provides a ligand contact to a purine D-ribonucleoside. Phosphate-binding positions include Gly-21, Arg-25, Arg-44, and 88 to 91; that span reads RVGS. Residues 180-182 and 204-205 contribute to the a purine D-ribonucleoside site; these read EME and SD. Asp-205 serves as the catalytic Proton donor.

It belongs to the PNP/UDP phosphorylase family. Homohexamer; trimer of homodimers.

It catalyses the reaction a purine D-ribonucleoside + phosphate = a purine nucleobase + alpha-D-ribose 1-phosphate. It carries out the reaction a purine 2'-deoxy-D-ribonucleoside + phosphate = a purine nucleobase + 2-deoxy-alpha-D-ribose 1-phosphate. Its function is as follows. Catalyzes the reversible phosphorolytic breakdown of the N-glycosidic bond in the beta-(deoxy)ribonucleoside molecules, with the formation of the corresponding free purine bases and pentose-1-phosphate. This Salmonella choleraesuis (strain SC-B67) protein is Purine nucleoside phosphorylase DeoD-type.